The primary structure comprises 466 residues: Replicative helicase loading/DNA remodeling protein DnaB (466 aa).

Residues Arg3 to Gln113 form a DDBH1 region. A DDBH2-1 region spans residues Glu200 to Glu292. The segment at Val293–Asn401 is DDBH2-2.

It belongs to the DnaB/DnaD family. As to quaternary structure, homotetramer, higher-order oligomers are induced by ssDNA. The DNA replisome assembles sequentially on oriC in this order; DnaA, DnaD, DnaB, DnaI-DnaC helicase. Part of the replication restart primosome, PriA binds first, then DnaD and subsequently DnaB bind.

In terms of biological role, helps DnaI load the DnaC replicative helicase onto single-stranded (ss)DNA. During DNA replication from the origin of replication (oriC) in the DNA replisome, DnaB and DnaD are required after DnaA and before subsequent helicase DnaC loading. Component of the replication restart primosome, which reloads the replicative helicase on sites other than oriC. Essential for replication initiation of the chromosome and plasmids. Remodels DNA, laterally compacts supercoiled plasmid and linear DNA. Binds supercoiled, nicked and linear double-stranded (ds)DNA and phage phiX174 single-stranded (ss)DNA; phiX174 ssDNA is a better substrate than for B.subtilis. No binding to phage M13 ssDNA although it induces oligomers. This Staphylococcus aureus (strain NCTC 8325 / PS 47) protein is Replicative helicase loading/DNA remodeling protein DnaB.